The primary structure comprises 668 residues: DNA damage-responsive serine/threonine-protein kinase RqkA (668 aa).

Residues 13-272 (YELLALLGEG…SGAALAHLWA (260 aa)) form the Protein kinase domain. Residues 19–27 (LGEGGSAQV) and K42 contribute to the ATP site. Catalysis depends on D137, which acts as the Proton acceptor.

The protein belongs to the protein kinase superfamily. Ser/Thr protein kinase family. It depends on pyrroloquinoline quinone as a cofactor. In terms of processing, autophosphorylated.

The enzyme catalyses L-seryl-[protein] + ATP = O-phospho-L-seryl-[protein] + ADP + H(+). The catalysed reaction is L-threonyl-[protein] + ATP = O-phospho-L-threonyl-[protein] + ADP + H(+). With respect to regulation, autokinase activity is stimulated by DNA damage. Stimulated by PQQ and DNA ends in vitro. Its function is as follows. Plays an important role in radiation resistance and DNA double-strand break (DSB) repair. Involved in transcriptional regulation of genes important for bacterial stress response. Phosphorylates PprA in vitro. The chain is DNA damage-responsive serine/threonine-protein kinase RqkA (rqkA) from Deinococcus radiodurans (strain ATCC 13939 / DSM 20539 / JCM 16871 / CCUG 27074 / LMG 4051 / NBRC 15346 / NCIMB 9279 / VKM B-1422 / R1).